The sequence spans 123 residues: Secreted RxLR effector protein RXLR-C21 (123 aa).

A signal peptide spans 1–23; that stretch reads MRLHLLVLSVIVVSLLVSDNAHA. Residues 32-65 carry the RxLR-dEER motif; that stretch reads RALRETPINGLVTNQLAVSRNLTPAKFITNSEER. A helical membrane pass occupies residues 101–121; sequence VTTICSIVLFVMVFGCLYKIF.

It belongs to the RxLR effector family.

Its subcellular location is the secreted. The protein localises to the host endoplasmic reticulum membrane. In terms of biological role, secreted effector that does not suppress pattern-triggered immunity (PTI) in plant host. The sequence is that of Secreted RxLR effector protein RXLR-C21 from Plasmopara halstedii (Downy mildew of sunflower).